A 310-amino-acid chain; its full sequence is MNLLRMNALTSKARSIERLKQTLNILSIRNHRQFSTIQQGSKYTLGFKKYLTLLNGEVGSFFHDVPLDLNEHEKTVNMIVEVPRWTTGKFEISKELRFNPIVQDTKNGKLRFVNNIFPYHGYIHNYGAIPQTWEDPTIEHKLGKCDVALKGDNDPLDCCEIGSDVLEMGSIKKVKVLGSLALIDDGELDWKVIVIDVNDPLSSKIDDLEKIEEYFPGILDTTREWFRKYKVPAGKPLNSFAFHEQYQNSNKTIQTIKKCHNSWKNLISGSLQEKYDNLPNTERAGNGVTLEDSVKPPSQIPPEVQKWYYV.

Residues M1 to N30 constitute a mitochondrion transit peptide. The Mg(2+) site is built by D152, D157, and D189.

Belongs to the PPase family. As to quaternary structure, homodimer that binds non-covalently to a protein complex in the inner mitochondrial membrane. The cofactor is Mg(2+).

It localises to the mitochondrion. It carries out the reaction diphosphate + H2O = 2 phosphate + H(+). Its function is as follows. Involved in energy production. Its activity is stimulated by uncouplers of ATP synthesis. In Saccharomyces cerevisiae (strain ATCC 204508 / S288c) (Baker's yeast), this protein is Inorganic pyrophosphatase, mitochondrial (PPA2).